We begin with the raw amino-acid sequence, 324 residues long: MDIKVMEYAAEIARRQSFTKAAEHLHIAQPSLSQQIKKLEAELGLTLFHRSHGSVTLTPHGRRFIEKAEDIIRSRDDLLREMQERSQGIGHKLSIGIPAVTGRYLFPPLLKQFLARYPHVEVQLVEKDPVSLEKMTAKGEVDLSVLSLPIEDERLSITPLLTEPVVLAVPKEKQRWMPPELVALIEKALEEDEGRQPCVPIDMVRNVPFILLKEGFGFRRTVLDLCAESGFKPNAAFKTSHIETAQSLVANGLGVTMAPNMVRRDKDPGVIYLSIQSAPSRTLVFVFLKNRYVSLTAQAFMELSRESLKQTFDEGCLGNKDENI.

The HTH lysR-type domain occupies 1–58 (MDIKVMEYAAEIARRQSFTKAAEHLHIAQPSLSQQIKKLEAELGLTLFHRSHGSVTLT). Residues 18–37 (FTKAAEHLHIAQPSLSQQIK) constitute a DNA-binding region (H-T-H motif).

The protein belongs to the LysR transcriptional regulatory family.

This is an uncharacterized protein from Bacillus subtilis (strain 168).